A 254-amino-acid chain; its full sequence is Small ribosomal subunit protein uS2 (254 aa).

Positions 225-254 (ALSERKREKDDAKLKEDEESKKASDKAEIQ) are disordered. Over residues 226-254 (LSERKREKDDAKLKEDEESKKASDKAEIQ) the composition is skewed to basic and acidic residues.

It belongs to the universal ribosomal protein uS2 family.

The protein is Small ribosomal subunit protein uS2 of Cytophaga hutchinsonii (strain ATCC 33406 / DSM 1761 / CIP 103989 / NBRC 15051 / NCIMB 9469 / D465).